Reading from the N-terminus, the 346-residue chain is Holliday junction branch migration complex subunit RuvB (346 aa).

The interval 2 to 183 is large ATPase domain (RuvB-L); it reads TDDRIIGAGA…FGIVQRLEFY (182 aa). ATP contacts are provided by residues isoleucine 22, arginine 23, glycine 64, lysine 67, threonine 68, threonine 69, 130 to 132, arginine 173, tyrosine 183, and arginine 220; that span reads EDF. Residue threonine 68 participates in Mg(2+) binding. The segment at 184-254 is small ATPAse domain (RuvB-S); the sequence is SVEELTRIVR…VAQAAMKMLK (71 aa). Positions 257–346 are head domain (RuvB-H); that stretch reads PEGFDELDRR…DLFAEVPDVG (90 aa). DNA contacts are provided by arginine 293, arginine 312, and arginine 317.

The protein belongs to the RuvB family. In terms of assembly, homohexamer. Forms an RuvA(8)-RuvB(12)-Holliday junction (HJ) complex. HJ DNA is sandwiched between 2 RuvA tetramers; dsDNA enters through RuvA and exits via RuvB. An RuvB hexamer assembles on each DNA strand where it exits the tetramer. Each RuvB hexamer is contacted by two RuvA subunits (via domain III) on 2 adjacent RuvB subunits; this complex drives branch migration. In the full resolvosome a probable DNA-RuvA(4)-RuvB(12)-RuvC(2) complex forms which resolves the HJ.

The protein localises to the cytoplasm. It catalyses the reaction ATP + H2O = ADP + phosphate + H(+). Its function is as follows. The RuvA-RuvB-RuvC complex processes Holliday junction (HJ) DNA during genetic recombination and DNA repair, while the RuvA-RuvB complex plays an important role in the rescue of blocked DNA replication forks via replication fork reversal (RFR). RuvA specifically binds to HJ cruciform DNA, conferring on it an open structure. The RuvB hexamer acts as an ATP-dependent pump, pulling dsDNA into and through the RuvAB complex. RuvB forms 2 homohexamers on either side of HJ DNA bound by 1 or 2 RuvA tetramers; 4 subunits per hexamer contact DNA at a time. Coordinated motions by a converter formed by DNA-disengaged RuvB subunits stimulates ATP hydrolysis and nucleotide exchange. Immobilization of the converter enables RuvB to convert the ATP-contained energy into a lever motion, pulling 2 nucleotides of DNA out of the RuvA tetramer per ATP hydrolyzed, thus driving DNA branch migration. The RuvB motors rotate together with the DNA substrate, which together with the progressing nucleotide cycle form the mechanistic basis for DNA recombination by continuous HJ branch migration. Branch migration allows RuvC to scan DNA until it finds its consensus sequence, where it cleaves and resolves cruciform DNA. The protein is Holliday junction branch migration complex subunit RuvB of Stenotrophomonas maltophilia (strain K279a).